The chain runs to 305 residues: Protein-methionine-sulfoxide reductase catalytic subunit MsrP (305 aa).

Residues 1 to 54 constitute a signal peptide (tat-type signal); it reads MLIRKPADHLPSEITSESVYFNRRQFMAGAAGLLLSAETLAGLAAKKSPLSQLA. Mo-molybdopterin is bound by residues Asn69, 72–73, Cys126, Thr161, Asn209, Arg214, and 225–227; these read YE and SIK.

It belongs to the MsrP family. Heterodimer of a catalytic subunit (MsrP) and a heme-binding subunit (MsrQ). It depends on Mo-molybdopterin as a cofactor. Predicted to be exported by the Tat system. The position of the signal peptide cleavage has not been experimentally proven.

It is found in the periplasm. The enzyme catalyses L-methionyl-[protein] + a quinone + H2O = L-methionyl-(S)-S-oxide-[protein] + a quinol. It carries out the reaction L-methionyl-[protein] + a quinone + H2O = L-methionyl-(R)-S-oxide-[protein] + a quinol. Part of the MsrPQ system that repairs oxidized periplasmic proteins containing methionine sulfoxide residues (Met-O), using respiratory chain electrons. Thus protects these proteins from oxidative-stress damage caused by reactive species of oxygen and chlorine generated by the host defense mechanisms. MsrPQ is essential for the maintenance of envelope integrity under bleach stress, rescuing a wide series of structurally unrelated periplasmic proteins from methionine oxidation. The catalytic subunit MsrP is non-stereospecific, being able to reduce both (R-) and (S-) diastereoisomers of methionine sulfoxide. The protein is Protein-methionine-sulfoxide reductase catalytic subunit MsrP of Chromobacterium violaceum (strain ATCC 12472 / DSM 30191 / JCM 1249 / CCUG 213 / NBRC 12614 / NCIMB 9131 / NCTC 9757 / MK).